We begin with the raw amino-acid sequence, 197 residues long: ADP-ribosylation factor-like protein 16 (197 aa).

GTP-binding positions include 30 to 37 (GATGVGKT), 82 to 86 (ELGGC), and 139 to 142 (NKID).

The protein belongs to the small GTPase superfamily. Arf family. Interacts with RIGI; this interaction is GTP-dependent and induced upon viral infection; this interaction suppresses the RNA sensing activity of RIGI.

Its subcellular location is the cytoplasm. Its function is as follows. May suppress the RNA sensing activity of RIGI in a GTP-dependent. The sequence is that of ADP-ribosylation factor-like protein 16 from Homo sapiens (Human).